We begin with the raw amino-acid sequence, 90 residues long: MRFVGLVNRIFRHSDSMTGRPGQQLASGARARIQGMTSFLSAEEKRKEEEMLRKIKEHGLKLCTKEKQEEMTKAQAGVRCMCTHLGKRGG.

It belongs to the UPF0329 family.

This Encephalitozoon cuniculi (strain GB-M1) (Microsporidian parasite) protein is UPF0329 protein ECU04_1650.